The following is a 471-amino-acid chain: uncharacterized protein (471 aa).

Helical transmembrane passes span alanine 10–isoleucine 30, isoleucine 46–isoleucine 66, threonine 87–serine 107, and isoleucine 280–alanine 300.

It belongs to the bacterial sugar transferase family.

It localises to the cell membrane. The protein operates within glycan metabolism; exopolysaccharide biosynthesis. In terms of biological role, may function as a sugar transferase. This is an uncharacterized protein from Haemophilus influenzae (strain ATCC 51907 / DSM 11121 / KW20 / Rd).